The following is an 881-amino-acid chain: Alanine--tRNA ligase (881 aa).

Residues His-566, His-570, Cys-668, and His-672 each coordinate Zn(2+).

It belongs to the class-II aminoacyl-tRNA synthetase family. The cofactor is Zn(2+).

Its subcellular location is the cytoplasm. It carries out the reaction tRNA(Ala) + L-alanine + ATP = L-alanyl-tRNA(Ala) + AMP + diphosphate. Its function is as follows. Catalyzes the attachment of alanine to tRNA(Ala) in a two-step reaction: alanine is first activated by ATP to form Ala-AMP and then transferred to the acceptor end of tRNA(Ala). Also edits incorrectly charged Ser-tRNA(Ala) and Gly-tRNA(Ala) via its editing domain. The sequence is that of Alanine--tRNA ligase from Frankia casuarinae (strain DSM 45818 / CECT 9043 / HFP020203 / CcI3).